We begin with the raw amino-acid sequence, 194 residues long: Probable GTP-binding protein EngB (194 aa).

An EngB-type G domain is found at 22–194; the sequence is DLPEYALAGR…AWQFIKEGME (173 aa). Residues 30 to 37, 57 to 61, 75 to 78, 142 to 145, and 174 to 176 each bind GTP; these read GRSNVGKS, GKTQT, DVPG, TKAD, and FSS. Mg(2+) is bound by residues S37 and T59.

This sequence belongs to the TRAFAC class TrmE-Era-EngA-EngB-Septin-like GTPase superfamily. EngB GTPase family. It depends on Mg(2+) as a cofactor.

Necessary for normal cell division and for the maintenance of normal septation. In Listeria monocytogenes serovar 1/2a (strain ATCC BAA-679 / EGD-e), this protein is Probable GTP-binding protein EngB.